The sequence spans 510 residues: Chromosomal replication initiator protein DnaA (510 aa).

Residues 1–87 (MSVELWQQCV…IGSRRSSAPR (87 aa)) are domain I, interacts with DnaA modulators. A domain II region spans residues 87-173 (RAAPNAPVSA…QVEGALKHTS (87 aa)). The disordered stretch occupies residues 140–160 (DSFDAMAEPASAPASSGRAEQ). A compositionally biased stretch (low complexity) spans 144–157 (AMAEPASAPASSGR). The segment at 174–390 (YLNRTFTFDT…GALKRVIAHS (217 aa)) is domain III, AAA+ region. Glycine 218, glycine 220, lysine 221, and threonine 222 together coordinate ATP. Residues 391-510 (HFMGRDITIE…YKNLLRTLTT (120 aa)) are domain IV, binds dsDNA.

Belongs to the DnaA family. Oligomerizes as a right-handed, spiral filament on DNA at oriC.

The protein resides in the cytoplasm. Functionally, plays an essential role in the initiation and regulation of chromosomal replication. ATP-DnaA binds to the origin of replication (oriC) to initiate formation of the DNA replication initiation complex once per cell cycle. Binds the DnaA box (a 9 base pair repeat at the origin) and separates the double-stranded (ds)DNA. Forms a right-handed helical filament on oriC DNA; dsDNA binds to the exterior of the filament while single-stranded (ss)DNA is stabiized in the filament's interior. The ATP-DnaA-oriC complex binds and stabilizes one strand of the AT-rich DNA unwinding element (DUE), permitting loading of DNA polymerase. After initiation quickly degrades to an ADP-DnaA complex that is not apt for DNA replication. Binds acidic phospholipids. The chain is Chromosomal replication initiator protein DnaA from Pseudomonas putida (strain GB-1).